Consider the following 90-residue polypeptide: Potassium channel toxin BmTXK-beta (90 aa).

The first 22 residues, 1-22 (MMKQQFFLFLAVIVMISSVIEA), serve as a signal peptide directing secretion. Positions 23 to 29 (GRGKEIM) are excised as a propeptide. The BetaSPN-type CS-alpha/beta domain maps to 55-90 (EYACPVIEKWCEDHCAAKKAIGKCEDTECKCLKLRK). 3 disulfide bridges follow: Cys58-Cys78, Cys65-Cys83, and Cys69-Cys85.

Belongs to the long chain scorpion toxin family. Class 2 subfamily. As to expression, expressed by the venom gland.

The protein resides in the secreted. Functionally, this recombinant peptide reversibly and dose-dependently inhibits the transient outward potassium current (I(To)) of rabbit atrial myocyte and prolongs the action potential duration of rabbit atrial myocyte without affecting the action potential amplitude. Thus, the voltage-gated potassium channels Kv4.1/KCND1, Kv4.2/KCND2, Kv4.3/KCND3 may be the target of this toxin. The chain is Potassium channel toxin BmTXK-beta from Olivierus martensii (Manchurian scorpion).